Reading from the N-terminus, the 324-residue chain is tRNA dimethylallyltransferase (324 aa).

ATP is bound at residue 18 to 25 (GPTAVGKT). 20-25 (TAVGKT) is a substrate binding site. An interaction with substrate tRNA region spans residues 43–46 (DSRQ).

Belongs to the IPP transferase family. Monomer. Mg(2+) serves as cofactor.

It carries out the reaction adenosine(37) in tRNA + dimethylallyl diphosphate = N(6)-dimethylallyladenosine(37) in tRNA + diphosphate. Catalyzes the transfer of a dimethylallyl group onto the adenine at position 37 in tRNAs that read codons beginning with uridine, leading to the formation of N6-(dimethylallyl)adenosine (i(6)A). In Salinibacter ruber (strain DSM 13855 / M31), this protein is tRNA dimethylallyltransferase.